A 100-amino-acid chain; its full sequence is NADH-quinone oxidoreductase subunit K (100 aa).

Helical transmembrane passes span 4–24 (LQHG…GLVI), 28–48 (LLFM…AFVV), and 60–80 (VMYI…LALL).

The protein belongs to the complex I subunit 4L family. In terms of assembly, NDH-1 is composed of 13 different subunits. Subunits NuoA, H, J, K, L, M, N constitute the membrane sector of the complex.

The protein resides in the cell inner membrane. The enzyme catalyses a quinone + NADH + 5 H(+)(in) = a quinol + NAD(+) + 4 H(+)(out). In terms of biological role, NDH-1 shuttles electrons from NADH, via FMN and iron-sulfur (Fe-S) centers, to quinones in the respiratory chain. The immediate electron acceptor for the enzyme in this species is believed to be ubiquinone. Couples the redox reaction to proton translocation (for every two electrons transferred, four hydrogen ions are translocated across the cytoplasmic membrane), and thus conserves the redox energy in a proton gradient. The sequence is that of NADH-quinone oxidoreductase subunit K from Shigella boydii serotype 18 (strain CDC 3083-94 / BS512).